Consider the following 454-residue polypeptide: Bifunctional protein GlmU (454 aa).

The interval 1 to 233 (MQATPRPLAL…EAETIGINSR (233 aa)) is pyrophosphorylase. UDP-N-acetyl-alpha-D-glucosamine-binding positions include 13–16 (LAAG), Lys27, Gln80, 85–86 (GT), 108–110 (YGD), Gly145, Glu159, Asn174, and Asn231. Asp110 contacts Mg(2+). Asn231 contributes to the Mg(2+) binding site. A linker region spans residues 234 to 254 (AELVRAEAQFQSQRRAALIEA). Positions 255 to 454 (GVTMQAPDSV…KAIKDAKSKD (200 aa)) are N-acetyltransferase. Residues Arg320 and Lys338 each coordinate UDP-N-acetyl-alpha-D-glucosamine. His350 (proton acceptor) is an active-site residue. UDP-N-acetyl-alpha-D-glucosamine contacts are provided by Tyr353 and Asn364. Residues Ala367, 373–374 (NY), Ser392, Ser410, and Arg427 each bind acetyl-CoA.

It in the N-terminal section; belongs to the N-acetylglucosamine-1-phosphate uridyltransferase family. This sequence in the C-terminal section; belongs to the transferase hexapeptide repeat family. Homotrimer. Requires Mg(2+) as cofactor.

It is found in the cytoplasm. It carries out the reaction alpha-D-glucosamine 1-phosphate + acetyl-CoA = N-acetyl-alpha-D-glucosamine 1-phosphate + CoA + H(+). The enzyme catalyses N-acetyl-alpha-D-glucosamine 1-phosphate + UTP + H(+) = UDP-N-acetyl-alpha-D-glucosamine + diphosphate. The protein operates within nucleotide-sugar biosynthesis; UDP-N-acetyl-alpha-D-glucosamine biosynthesis; N-acetyl-alpha-D-glucosamine 1-phosphate from alpha-D-glucosamine 6-phosphate (route II): step 2/2. Its pathway is nucleotide-sugar biosynthesis; UDP-N-acetyl-alpha-D-glucosamine biosynthesis; UDP-N-acetyl-alpha-D-glucosamine from N-acetyl-alpha-D-glucosamine 1-phosphate: step 1/1. It participates in bacterial outer membrane biogenesis; LPS lipid A biosynthesis. Functionally, catalyzes the last two sequential reactions in the de novo biosynthetic pathway for UDP-N-acetylglucosamine (UDP-GlcNAc). The C-terminal domain catalyzes the transfer of acetyl group from acetyl coenzyme A to glucosamine-1-phosphate (GlcN-1-P) to produce N-acetylglucosamine-1-phosphate (GlcNAc-1-P), which is converted into UDP-GlcNAc by the transfer of uridine 5-monophosphate (from uridine 5-triphosphate), a reaction catalyzed by the N-terminal domain. The polypeptide is Bifunctional protein GlmU (Jannaschia sp. (strain CCS1)).